The following is a 176-amino-acid chain: NAD(P)H-quinone oxidoreductase subunit 6, chloroplastic (176 aa).

A run of 5 helical transmembrane segments spans residues 10 to 30 (FLLV…VLLP), 32 to 52 (PIYS…FYIL), 61 to 81 (AQLL…VMFM), 92 to 112 (LWTV…ISLI), and 152 to 172 (FFLP…GAIA).

This sequence belongs to the complex I subunit 6 family. In terms of assembly, NDH is composed of at least 16 different subunits, 5 of which are encoded in the nucleus.

The protein resides in the plastid. Its subcellular location is the chloroplast thylakoid membrane. The enzyme catalyses a plastoquinone + NADH + (n+1) H(+)(in) = a plastoquinol + NAD(+) + n H(+)(out). The catalysed reaction is a plastoquinone + NADPH + (n+1) H(+)(in) = a plastoquinol + NADP(+) + n H(+)(out). NDH shuttles electrons from NAD(P)H:plastoquinone, via FMN and iron-sulfur (Fe-S) centers, to quinones in the photosynthetic chain and possibly in a chloroplast respiratory chain. The immediate electron acceptor for the enzyme in this species is believed to be plastoquinone. Couples the redox reaction to proton translocation, and thus conserves the redox energy in a proton gradient. The sequence is that of NAD(P)H-quinone oxidoreductase subunit 6, chloroplastic (ndhG) from Solanum bulbocastanum (Wild potato).